Consider the following 304-residue polypeptide: MSEPLNLHRLTTESRNSQTVEIHKANTLGILKMINNEDMKVAAAVQEVLPDIKTAVDCAYESFQNGGRLIYTGAGTSGRLGVMDAVECPPTYSVSPDQVIGIMAGGPEAFLQAAEGIEDSEEAGAEDLRNIQLTSNDTVIAIAASGRTPYAAGALRYARKVGAHTIALTCNENSAISKDADHSIEVVVGPEAITGSTRMKAATAHKMILNMISTAVMVKIGKVYENLMVDVNVSNKKLKERAISIIQSLTNASYDTARYTLEQADHHVKTAIVMLKTSTDQKQAQTLLDEANGFIDKAIEHYHP.

Ser-2 carries the phosphoserine modification. In terms of domain architecture, SIS spans 59 to 222 (AYESFQNGGR…STAVMVKIGK (164 aa)). Glu-87 acts as the Proton donor in catalysis. The active site involves Glu-118.

It belongs to the GCKR-like family. MurNAc-6-P etherase subfamily. Homodimer.

The enzyme catalyses N-acetyl-D-muramate 6-phosphate + H2O = N-acetyl-D-glucosamine 6-phosphate + (R)-lactate. It participates in amino-sugar metabolism; N-acetylmuramate degradation. Functionally, specifically catalyzes the cleavage of the D-lactyl ether substituent of MurNAc 6-phosphate, producing GlcNAc 6-phosphate and D-lactate. This is N-acetylmuramic acid 6-phosphate etherase from Bacillus subtilis (strain 168).